Here is a 513-residue protein sequence, read N- to C-terminus: ATP synthase subunit alpha (513 aa).

169–176 (GDRQTGKT) contributes to the ATP binding site.

The protein belongs to the ATPase alpha/beta chains family. F-type ATPases have 2 components, CF(1) - the catalytic core - and CF(0) - the membrane proton channel. CF(1) has five subunits: alpha(3), beta(3), gamma(1), delta(1), epsilon(1). CF(0) has three main subunits: a(1), b(2) and c(9-12). The alpha and beta chains form an alternating ring which encloses part of the gamma chain. CF(1) is attached to CF(0) by a central stalk formed by the gamma and epsilon chains, while a peripheral stalk is formed by the delta and b chains.

It is found in the cell inner membrane. It catalyses the reaction ATP + H2O + 4 H(+)(in) = ADP + phosphate + 5 H(+)(out). Its function is as follows. Produces ATP from ADP in the presence of a proton gradient across the membrane. The alpha chain is a regulatory subunit. This chain is ATP synthase subunit alpha, found in Edwardsiella ictaluri (strain 93-146).